The primary structure comprises 262 residues: E3 ubiquitin-protein ligase NEURL3 (262 aa).

An NHR domain is found at 17–173 (ALRFHAEAKG…TTKAIELLDP (157 aa)). Residues 202-241 (CAICFYHAANTRLVPCGHTYFCRYCAWRVFSDTAKCPVCR) form an RING-type zinc finger.

As to quaternary structure, (Microbial infection) Interacts with hepatitis C virus protein E1; this interaction prevents E1 interaction with E2 and subsequently inhibits viral infection.

Its subcellular location is the cytoplasm. The enzyme catalyses S-ubiquitinyl-[E2 ubiquitin-conjugating enzyme]-L-cysteine + [acceptor protein]-L-lysine = [E2 ubiquitin-conjugating enzyme]-L-cysteine + N(6)-ubiquitinyl-[acceptor protein]-L-lysine.. It participates in protein modification; protein ubiquitination. In terms of biological role, E3 ubiquitin-protein ligase that plays a role in various biological processes such as lung development or innate immunity. Seems to utilize UBE2E1. Promotes innate antiviral response by catalyzing 'Lys-63'-linked ubiquitination of IRF7. Also inhibits hepatitis C virus assembly by directly binding to viral E1 envelope glycoprotein to disrupt its interaction with E2. Plays an essential role in TLR4-mediated activation of MAPK pathways by promoting 'Lys-48'-linked polyubiquitination of the phosphatase DUSP1/MKP1. The sequence is that of E3 ubiquitin-protein ligase NEURL3 (NEURL3) from Homo sapiens (Human).